An 896-amino-acid polypeptide reads, in one-letter code: Vacuolar zinc transporter TgZnT (896 aa).

Topologically, residues 1–472 (MPFSCFVFSQ…ETGTQRARRK (472 aa)) are cytoplasmic. Over residues 82 to 91 (VLSSRGDESV) the composition is skewed to basic and acidic residues. 3 disordered regions span residues 82–104 (VLSSRGDESVRSPQGRQVHSPGF), 205–227 (MKEIPSPRSRSPSDPDSSSRPCA), and 255–329 (SSSC…SSAS). Composition is skewed to low complexity over residues 210-225 (SPRSRSPSDPDSSSRP) and 255-266 (SSSCCSRSNSSS). Residues 303–322 (VHERRAEATCCAPRDRHGGD) are compositionally biased toward basic and acidic residues. The helical transmembrane segment at 473–493 (LVMASMVCCVFMFVEIVAGVL) threads the bilayer. Residues 494–502 (ANSLALMTD) lie on the Vacuolar side of the membrane. The helical transmembrane segment at 503–523 (ASHLLSDLCAFLISLFALWVS) threads the bilayer. Residues 524-539 (ELKGNPSMSFGYHRAE) are Cytoplasmic-facing. A helical membrane pass occupies residues 540–560 (ILGALLSVFLIWVLTAVLIYA). The Vacuolar segment spans residues 561–573 (ACFRLVDPPQVDG). A helical membrane pass occupies residues 574–594 (ELMFWTALLGTLANLFMTHIL). At 595 to 737 (KVHSHGIGQV…YENMNLRAAY (143 aa)) the chain is on the cytoplasmic side. A disordered region spans residues 621-707 (LQASSSSPEK…RPFSASSAGS (87 aa)). The span at 656 to 680 (RDAEAGRDAEAGRDAEAGRDAETGR) shows a compositional bias: basic and acidic residues. A helical membrane pass occupies residues 738 to 758 (IHALGDLLQNIGVMIASALIW). Over 759-762 (WRPD) the chain is Vacuolar. A helical membrane pass occupies residues 763 to 783 (WAIADPICTFIFSIFVLFTTL). Residues 784 to 896 (SILKEALNVL…CSDPMKVFRR (113 aa)) lie on the Cytoplasmic side of the membrane.

It belongs to the cation diffusion facilitator (CDF) transporter (TC 2.A.4) family. SLC30A subfamily.

It is found in the vacuole membrane. The protein localises to the cytoplasmic vesicle membrane. Vacuolar zinc transporter that is probably involved in the transfer of zinc ions from the cytosol to the vacuole for intracellular storage. Plays an essential role in extracellular zinc tolerance. The polypeptide is Vacuolar zinc transporter TgZnT (Toxoplasma gondii (strain ATCC 50853 / GT1)).